The primary structure comprises 208 residues: Uracil phosphoribosyltransferase (208 aa).

Residues Arg-78, Arg-103, and 130 to 138 (DPMLATGGS) each bind 5-phospho-alpha-D-ribose 1-diphosphate. Uracil-binding positions include Ile-193 and 198 to 200 (GDA). Position 199 (Asp-199) interacts with 5-phospho-alpha-D-ribose 1-diphosphate.

The protein belongs to the UPRTase family. It depends on Mg(2+) as a cofactor.

It catalyses the reaction UMP + diphosphate = 5-phospho-alpha-D-ribose 1-diphosphate + uracil. It functions in the pathway pyrimidine metabolism; UMP biosynthesis via salvage pathway; UMP from uracil: step 1/1. With respect to regulation, allosterically activated by GTP. Its function is as follows. Catalyzes the conversion of uracil and 5-phospho-alpha-D-ribose 1-diphosphate (PRPP) to UMP and diphosphate. In Neisseria meningitidis serogroup C (strain 053442), this protein is Uracil phosphoribosyltransferase.